The chain runs to 359 residues: Protein RecA (359 aa).

77–84 (GPESSGKT) lines the ATP pocket.

It belongs to the RecA family.

It localises to the cytoplasm. Can catalyze the hydrolysis of ATP in the presence of single-stranded DNA, the ATP-dependent uptake of single-stranded DNA by duplex DNA, and the ATP-dependent hybridization of homologous single-stranded DNAs. It interacts with LexA causing its activation and leading to its autocatalytic cleavage. The sequence is that of Protein RecA from Paramagnetospirillum magneticum (strain ATCC 700264 / AMB-1) (Magnetospirillum magneticum).